The primary structure comprises 598 residues: Probable translation initiation factor IF-2 (598 aa).

In terms of domain architecture, tr-type G spans 3–225 (LRCPIVSVLG…GLAQRFLEQK (223 aa)). Positions 12–19 (GHVDHGKT) are G1. 12–19 (GHVDHGKT) is a binding site for GTP. The tract at residues 37–41 (GITQH) is G2. The G3 stretch occupies residues 76-79 (DTPG). GTP-binding positions include 76 to 80 (DTPGH) and 130 to 133 (NKVD). The interval 130–133 (NKVD) is G4. The segment at 200–202 (SAM) is G5.

It belongs to the TRAFAC class translation factor GTPase superfamily. Classic translation factor GTPase family. IF-2 subfamily.

Its function is as follows. Function in general translation initiation by promoting the binding of the formylmethionine-tRNA to ribosomes. Seems to function along with eIF-2. The polypeptide is Probable translation initiation factor IF-2 (Methanococcus maripaludis (strain DSM 14266 / JCM 13030 / NBRC 101832 / S2 / LL)).